The primary structure comprises 351 residues: Biotin synthase (351 aa).

Residues 44–262 form the Radical SAM core domain; sequence NRVQVSTLLS…LAVARILMPQ (219 aa). [4Fe-4S] cluster contacts are provided by Cys59, Cys63, and Cys66. [2Fe-2S] cluster-binding residues include Cys103, Cys134, Cys194, and Arg266.

It belongs to the radical SAM superfamily. Biotin synthase family. Homodimer. Requires [4Fe-4S] cluster as cofactor. [2Fe-2S] cluster is required as a cofactor.

It carries out the reaction (4R,5S)-dethiobiotin + (sulfur carrier)-SH + 2 reduced [2Fe-2S]-[ferredoxin] + 2 S-adenosyl-L-methionine = (sulfur carrier)-H + biotin + 2 5'-deoxyadenosine + 2 L-methionine + 2 oxidized [2Fe-2S]-[ferredoxin]. The protein operates within cofactor biosynthesis; biotin biosynthesis; biotin from 7,8-diaminononanoate: step 2/2. Functionally, catalyzes the conversion of dethiobiotin (DTB) to biotin by the insertion of a sulfur atom into dethiobiotin via a radical-based mechanism. This chain is Biotin synthase, found in Pseudomonas fluorescens (strain ATCC BAA-477 / NRRL B-23932 / Pf-5).